The sequence spans 307 residues: Probable aspartoacylase (307 aa).

The Zn(2+) site is built by histidine 13 and glutamate 16. Residues arginine 55 and 62 to 63 (NR) contribute to the substrate site. Histidine 105 contributes to the Zn(2+) binding site. Positions 163 and 276 each coordinate substrate.

It belongs to the AspA/AstE family. Aspartoacylase subfamily. Zn(2+) is required as a cofactor.

It catalyses the reaction an N-acyl-L-aspartate + H2O = a carboxylate + L-aspartate. The polypeptide is Probable aspartoacylase (Prochlorococcus marinus (strain SARG / CCMP1375 / SS120)).